The sequence spans 264 residues: Matrilysin (264 aa).

Residues 1–17 (MQLTLFCFVCLLPGHLA) form the signal peptide. The propeptide at 18–94 (LPLSQEAGDV…PRCGVPDVAE (77 aa)) is activation peptide. The Cysteine switch motif lies at 85-92 (PRCGVPDV). C87 contributes to the Zn(2+) binding site. D153 provides a ligand contact to Ca(2+). The Zn(2+) site is built by H163 and D165. Ca(2+)-binding residues include D170, G171, G173, and T175. Residue H178 coordinates Zn(2+). Residues G185, G187, and D189 each coordinate Ca(2+). Residue H191 coordinates Zn(2+). 2 residues coordinate Ca(2+): D193 and E196. H214 is a Zn(2+) binding site. E215 is a catalytic residue. H218 and H224 together coordinate Zn(2+).

This sequence belongs to the peptidase M10A family. It depends on Ca(2+) as a cofactor. Zn(2+) is required as a cofactor. Expressed in the intestinal epithelium (at protein level).

The protein localises to the secreted. It localises to the extracellular space. Its subcellular location is the extracellular matrix. The catalysed reaction is Cleavage of 14-Ala-|-Leu-15 and 16-Tyr-|-Leu-17 in B chain of insulin. No action on collagen types I, II, IV, V. Cleaves gelatin chain alpha2(I) &gt; alpha1(I).. Degrades casein, gelatins of types I, III, IV, and V, and fibronectin. Activates procollagenase. Functionally, may play a role in tissue reorganization. This Mus musculus (Mouse) protein is Matrilysin (Mmp7).